The primary structure comprises 98 residues: Homeobox protein Ht-En (98 aa).

Positions 3-62 (EKRPRTAFTGDQLARLKREFSENKYLTEQRRTCLAKELNLNESQIKIWFQNKRAKMKKAS) form a DNA-binding region, homeobox. The disordered stretch occupies residues 79-98 (NHSSSSSSSSSSSSSIFLLA). Low complexity predominate over residues 81 to 98 (SSSSSSSSSSSSSIFLLA).

It belongs to the engrailed homeobox family. Phosphorylated in the Ser-rich domain.

It localises to the nucleus. Its function is as follows. This protein specifies the body segmentation pattern. The polypeptide is Homeobox protein Ht-En (HT-EN) (Helobdella triserialis (Leech)).